Here is a 181-residue protein sequence, read N- to C-terminus: Shikimate kinase (181 aa).

Residue 11–16 (GAGKSK) coordinates ATP. Position 15 (Ser15) interacts with Mg(2+). Substrate contacts are provided by Asp33, Arg58, and Gly80. Arg128 is an ATP binding site. Arg144 lines the substrate pocket.

The protein belongs to the shikimate kinase family. In terms of assembly, monomer. It depends on Mg(2+) as a cofactor.

It localises to the cytoplasm. The catalysed reaction is shikimate + ATP = 3-phosphoshikimate + ADP + H(+). Its pathway is metabolic intermediate biosynthesis; chorismate biosynthesis; chorismate from D-erythrose 4-phosphate and phosphoenolpyruvate: step 5/7. Its function is as follows. Catalyzes the specific phosphorylation of the 3-hydroxyl group of shikimic acid using ATP as a cosubstrate. The polypeptide is Shikimate kinase (Leptospira biflexa serovar Patoc (strain Patoc 1 / Ames)).